We begin with the raw amino-acid sequence, 252 residues long: Floral homeotic protein AGAMOUS (252 aa).

The tract at residues 1-20 (MAYQSELGGDSSPLRKSGRG) is disordered. In terms of domain architecture, MADS-box spans 19 to 73 (RGKIEIKRIENTTNRQVTFCKRRNGLLKKAYELSVLCDAEVALIVFSSRGRLYEY). Positions 99–166 (AEINAQYYQQ…KKNELLFSEI (68 aa)) form a coiled coil. Positions 103 to 193 (AQYYQQESAK…RAKIAENERN (91 aa)) constitute a K-box domain.

As to quaternary structure, homodimer, capable of binding to CArG-box sequences. Forms a heterodimer via the K-box domain with either SEPALATTA1/AGL2, SEPALATTA2/AGL4, SEPALLATA3/AGL9 or AGL6. Heterodimerization also seen with some other Agamous-like MADS-box proteins. Interacts with AGL15 and AGL16. Component of a complex made of FLOR1, VSP1 and AGAMOUS (AG). Binds directly with FLR1. As to expression, detected early in the floral meristem but mostly expressed in stamen and carpel primordia.

It is found in the nucleus. Probable transcription factor involved in the control of organ identity during the early development of flowers. Is required for normal development of stamens and carpels in the wild-type flower. Plays a role in maintaining the determinacy of the floral meristem. Acts as C class cadastral protein by repressing the A class floral homeotic genes like APETALA1. Forms a heterodimer via the K-box domain with either SEPALATTA1/AGL2, SEPALATTA2/AGL4, SEPALLATA3/AGL9 or AGL6 that could be involved in genes regulation during floral meristem development. Controls AHL21/GIK, a multifunctional chromatin modifier in reproductive organ patterning and differentiation. Induces microsporogenesis through the activation of SPL/NZZ. The chain is Floral homeotic protein AGAMOUS (AG) from Arabidopsis thaliana (Mouse-ear cress).